The chain runs to 357 residues: Protein phosphatase 1 regulatory subunit 42 (357 aa).

LRR repeat units lie at residues 29–50 (KITHINFSDKNIDAIEDLSLCK), 51–72 (NLSVLYLYDNCISQITNLNYAT), 73–94 (NLTHLYLQNNCIPCIENLRSLK), 95–116 (KLEKLYLGGNYIAVIEGLEGLG), 117–138 (ELRELHVENQRLPLGEKLLFDP), 147–168 (SLSILNISNNNIDDIRDLEILE), and 169–190 (NLNQLIAVDNQLLHVKDLEFLL). In terms of domain architecture, LRRCT spans 204 to 242 (NPVCLKPKYRDRLILVSKSLEFLDGKEIKNIERQFLMNW).

Interacts with PPP1CC isoform gamma-2; the interaction is direct. Interacts with actin, dynein, KIF5B, KIFC1 and tubulin. Associates with microtubules. Post-translationally, phosphorylated; in the testis.

It localises to the cytoplasm. It is found in the cytoskeleton. The protein resides in the microtubule organizing center. Its subcellular location is the centrosome. Regulates phosphatase activity of protein phosphatase 1 (PP1) complexes in the testis. This is Protein phosphatase 1 regulatory subunit 42 (PPP1R42) from Macaca fascicularis (Crab-eating macaque).